Reading from the N-terminus, the 402-residue chain is Ferrochelatase, mitochondrial (402 aa).

A mitochondrion-targeting transit peptide spans 1-33; that stretch reads MAAAGRAARPLVAGGRQLRVPLRWRGQVAAAAP. Residues Arg94, Tyr102, and Ser109 each contribute to the protoporphyrin IX site. Cys175 is a [2Fe-2S] cluster binding site. Active-site residues include His209 and Asp362. Residues Cys382, Cys385, and Cys390 each contribute to the [2Fe-2S] cluster site.

The protein belongs to the ferrochelatase family. In terms of assembly, homodimer. Homotetramer. The cofactor is [2Fe-2S] cluster.

It is found in the mitochondrion inner membrane. It catalyses the reaction heme b + 2 H(+) = protoporphyrin IX + Fe(2+). The protein operates within porphyrin-containing compound metabolism; protoheme biosynthesis; protoheme from protoporphyrin-IX: step 1/1. Its function is as follows. Catalyzes the ferrous insertion into protoporphyrin IX. In Gallus gallus (Chicken), this protein is Ferrochelatase, mitochondrial.